The primary structure comprises 359 residues: Phospho-N-acetylmuramoyl-pentapeptide-transferase (359 aa).

10 consecutive transmembrane segments (helical) span residues 3-23 (QILI…PVLI), 55-75 (VAIV…GVVI), 84-104 (GLLV…DDLI), 117-137 (TAKT…ALQF), 156-176 (IATV…VVSA), 190-210 (LAAG…FWQF), 231-251 (LAII…WNAA), 255-275 (IFMG…LSVT), 283-303 (VVLG…ILAF), and 330-350 (VIIR…ALFY).

It belongs to the glycosyltransferase 4 family. MraY subfamily. It depends on Mg(2+) as a cofactor.

It localises to the cell membrane. It carries out the reaction UDP-N-acetyl-alpha-D-muramoyl-L-alanyl-gamma-D-glutamyl-meso-2,6-diaminopimeloyl-D-alanyl-D-alanine + di-trans,octa-cis-undecaprenyl phosphate = di-trans,octa-cis-undecaprenyl diphospho-N-acetyl-alpha-D-muramoyl-L-alanyl-D-glutamyl-meso-2,6-diaminopimeloyl-D-alanyl-D-alanine + UMP. The protein operates within cell wall biogenesis; peptidoglycan biosynthesis. Its function is as follows. Catalyzes the initial step of the lipid cycle reactions in the biosynthesis of the cell wall peptidoglycan: transfers peptidoglycan precursor phospho-MurNAc-pentapeptide from UDP-MurNAc-pentapeptide onto the lipid carrier undecaprenyl phosphate, yielding undecaprenyl-pyrophosphoryl-MurNAc-pentapeptide, known as lipid I. The chain is Phospho-N-acetylmuramoyl-pentapeptide-transferase from Mycolicibacterium vanbaalenii (strain DSM 7251 / JCM 13017 / BCRC 16820 / KCTC 9966 / NRRL B-24157 / PYR-1) (Mycobacterium vanbaalenii).